Consider the following 1469-residue polypeptide: WASH complex subunit 2 (1469 aa).

Ser-136 carries the phosphoserine modification. 2 disordered regions span residues 178–349 (YDSK…RMPV) and 367–546 (KVQS…RVAG). A compositionally biased stretch (basic and acidic residues) spans 197–206 (SDEKEPETKK). A Phosphoserine modification is found at Ser-227. 2 stretches are compositionally biased toward low complexity: residues 276–293 (SPPS…TSSP) and 306–316 (STASLSSSSSS). Positions 351-372 (LFNEDEFKSFMSEIVDKVQSKT) match the LFa 1 motif. A compositionally biased stretch (polar residues) spans 370 to 385 (SKTPSSSVSPATTIST). Basic and acidic residues predominate over residues 387-399 (EPPKTKKPVEEYP). Phosphoserine is present on residues Ser-422 and Ser-426. Positions 519–528 (FDDDDLDIDD) are enriched in acidic residues. An LFa 5 motif is present at residues 550–563 (LFEDDDQDDVTDLF). Positions 571 to 591 (IPKETSSGVSPNKNVETPVAS) are disordered. Positions 574 to 585 (ETSSGVSPNKNV) are enriched in polar residues. At Ser-580 the chain carries Phosphoserine. Phosphothreonine is present on Thr-587. Residues 595-605 (LFDDIEDEDLF) carry the LFa 6 motif. 3 disordered regions span residues 607–760 (TPKA…TDLF), 933–1254 (ALPN…KLFS), and 1316–1469 (VTTA…LDFK). Composition is skewed to basic and acidic residues over residues 626–649 (GEDK…EKQH) and 671–687 (TEQK…KDDT). A Phosphothreonine modification is found at Thr-693. An LFa 8 motif is present at residues 698 to 709 (LFSEDLTDDELF). Composition is skewed to polar residues over residues 709–728 (FSST…TNEF), 735–745 (YTSQTEENVSP), and 938–956 (PSAT…SVSS). 3 stretches are compositionally biased toward basic and acidic residues: residues 971-990 (DNDH…KDEL), 1031-1042 (ETDRSEVKETPE), and 1077-1089 (RKQE…RDEP). Residues 1091–1109 (ATVQTEAEAPSSGQNTVSS) are compositionally biased toward polar residues. Residues 1118 to 1136 (NKSRARGPAKRRPSTRRGR) are compositionally biased toward basic residues. Residues 1159–1170 (DSPEVEHSERSS) show a composition bias toward basic and acidic residues. A phosphoserine mark is found at Ser-1241, Ser-1245, Ser-1254, Ser-1344, Ser-1380, Ser-1381, and Ser-1408. Composition is skewed to low complexity over residues 1417 to 1426 (FGGSSTSKAA) and 1434 to 1452 (AART…PTAT).

The protein belongs to the FAM21 family. Component of the WASH complex.

Acts at least in part as component of the WASH complex which may regulate wash nucleation-promoting factor (NPF) activity and is required for its membrane targeting during endosomal sorting. The polypeptide is WASH complex subunit 2 (Drosophila melanogaster (Fruit fly)).